Consider the following 165-residue polypeptide: Methylated-DNA--protein-cysteine methyltransferase (165 aa).

The active-site Nucleophile; methyl group acceptor is cysteine 126.

Belongs to the MGMT family.

The protein resides in the cytoplasm. The enzyme catalyses a 6-O-methyl-2'-deoxyguanosine in DNA + L-cysteinyl-[protein] = S-methyl-L-cysteinyl-[protein] + a 2'-deoxyguanosine in DNA. It catalyses the reaction a 4-O-methyl-thymidine in DNA + L-cysteinyl-[protein] = a thymidine in DNA + S-methyl-L-cysteinyl-[protein]. Functionally, involved in the cellular defense against the biological effects of O6-methylguanine (O6-MeG) and O4-methylthymine (O4-MeT) in DNA. Repairs the methylated nucleobase in DNA by stoichiometrically transferring the methyl group to a cysteine residue in the enzyme. This is a suicide reaction: the enzyme is irreversibly inactivated. The protein is Methylated-DNA--protein-cysteine methyltransferase of Mycobacterium bovis (strain ATCC BAA-935 / AF2122/97).